A 588-amino-acid polypeptide reads, in one-letter code: Complement component C8 beta chain (588 aa).

The N-terminal stretch at 1–30 (MFRVAIPRSALNLHSCLLHVTLSLVLISKA) is a signal peptide. The propeptide occupies 31–46 (AITTAGNEDSDVREAR). One can recognise a TSP type-1 1 domain in the interval 58-113 (DCVISDWSAWSRCDTCQKKRYRYAKLDQPSQFGGEPCHFHDMEDEACDVPDRYTCD). 7 cysteine pairs are disulfide-bonded: Cys-59–Cys-94, Cys-70–Cys-104, Cys-73–Cys-112, Cys-118–Cys-129, Cys-123–Cys-142, Cys-136–Cys-151, and Cys-158–Cys-196. 2 C-linked (Man) tryptophan glycosylation sites follow: Trp-64 and Trp-67. The region spanning 115-152 (IPLCEGFLCTQTGRCIHRTLQCNGEDDCGDMSDEVGCK) is the LDL-receptor class A domain. Residues Leu-134, Asn-137, Glu-139, Asp-141, Asp-147, and Glu-148 each coordinate Ca(2+). The region spanning 154 to 500 (VPKPCRQEAE…EYLAESSSCR (347 aa)) is the MACPF domain. Transmembrane regions (beta stranded) follow at residues 248–255 (TIVSIGFA), 258–265 (GIAEFGFN), 375–382 (TQAGLKIG), and 388–395 (VYVSAGIE). 5 disulfides stabilise this stretch: Cys-374–Cys-399, Cys-499–Cys-547, Cys-501–Cys-517, Cys-504–Cys-519, and Cys-521–Cys-530. In terms of domain architecture, EGF-like spans 501–531 (CAPCHNNGVAVLRGTRCDCVCPTGYTGRGCE). The TSP type-1 2 domain maps to 542–588 (DGSWSCWGAWSSCSGRKMSRSRQCNNPVPSDGGLACRGLQQESTDCF). Trp-548 and Trp-551 each carry a C-linked (Man) tryptophan glycan. The cysteines at positions 554 and 587 are disulfide-linked.

Belongs to the complement C6/C7/C8/C9 family. In terms of assembly, heterotrimer of 3 chains: alpha (C8A), beta (C8B) and gamma (C8G); the alpha and gamma chains are disulfide bonded. Component of the membrane attack complex (MAC), composed of complement C5b, C6, C7, C8A, C8B, C8G and multiple copies of the pore-forming subunit C9.

Its subcellular location is the secreted. It localises to the target cell membrane. Component of the membrane attack complex (MAC), a multiprotein complex activated by the complement cascade, which inserts into a target cell membrane and forms a pore, leading to target cell membrane rupture and cell lysis. The MAC is initiated by proteolytic cleavage of C5 into complement C5b in response to the classical, alternative, lectin and GZMK complement pathways. The complement pathways consist in a cascade of proteins that leads to phagocytosis and breakdown of pathogens and signaling that strengthens the adaptive immune system. C8B, together with C8A and C8G, inserts into the target membrane, but does not form pores by itself. During MAC assembly, associates with C5b, C6 and C7 to form the C5b8 intermediate complex that inserts into the target membrane and traverses the bilayer increasing membrane rigidity. This Paralichthys olivaceus (Bastard halibut) protein is Complement component C8 beta chain (c8b).